A 217-amino-acid polypeptide reads, in one-letter code: MTENNEFDVADLRREYIRGGLRRSDLTENPLELFERWLKQACEARLPDPTAMCVATVDTNGQPYQRIVLLKHYDDQGLVFYTNLGSRKAQQLAENPHISLLFPWHMLDRQVIFLGKAERLSTLEVLKYFHSRPKDSQIGAWVSQQSSRISARGVLESKFLELKQKFQQGDVPLPSFWGGFRVKFDSVEFWQGGEHRLHDRFIYQREADAWKIDRLAP.

Residues R13–Y16 and K71 contribute to the substrate site. FMN-binding positions include R66 to K71, Y81 to T82, R87, K88, and Q110. Substrate contacts are provided by Y128, R132, and S136. FMN-binding positions include Q145–S146 and W190. R196–H198 contacts substrate. R200 is a binding site for FMN.

The protein belongs to the pyridoxamine 5'-phosphate oxidase family. In terms of assembly, homodimer. FMN is required as a cofactor.

It catalyses the reaction pyridoxamine 5'-phosphate + O2 + H2O = pyridoxal 5'-phosphate + H2O2 + NH4(+). It carries out the reaction pyridoxine 5'-phosphate + O2 = pyridoxal 5'-phosphate + H2O2. The protein operates within cofactor metabolism; pyridoxal 5'-phosphate salvage; pyridoxal 5'-phosphate from pyridoxamine 5'-phosphate: step 1/1. It participates in cofactor metabolism; pyridoxal 5'-phosphate salvage; pyridoxal 5'-phosphate from pyridoxine 5'-phosphate: step 1/1. Its function is as follows. Catalyzes the oxidation of either pyridoxine 5'-phosphate (PNP) or pyridoxamine 5'-phosphate (PMP) into pyridoxal 5'-phosphate (PLP). In Yersinia pestis bv. Antiqua (strain Antiqua), this protein is Pyridoxine/pyridoxamine 5'-phosphate oxidase.